Consider the following 1290-residue polypeptide: Sorbin and SH3 domain-containing protein 1 (1290 aa).

3 disordered regions span residues 1-211 (MSSE…LSDV), 238-271 (HKLNRDDDSDVHSPRYSFSDDTKSPLSVPRSKSE), and 286-313 (TLPLPARSSSLKSSPERNDWEPLDKKVD). Residues 45-61 (SSSYRGTPSSSPVSPQE) are compositionally biased toward low complexity. Phosphothreonine is present on Thr-51. Phosphoserine is present on residues Ser-55, Ser-58, and Ser-62. The segment covering 62-71 (SPKHESKSGL) has biased composition (basic and acidic residues). 2 stretches are compositionally biased toward polar residues: residues 83–95 (LSSSADTNGNAQP) and 123–153 (EVSSSHIETDSQDFPPTSRPSSAYPSTTIVN). The span at 161-173 (HNRDPASERRAGE) shows a compositional bias: basic and acidic residues. Residues Asp-164 and Asp-175 each carry the phosphoserine modification. Thr-179 is subject to Phosphothreonine. Phosphoserine is present on residues Ser-185, Ala-194, Ser-204, Ser-209, Ser-254, Ser-261, Ser-270, and Pro-288. A compositionally biased stretch (basic and acidic residues) spans 189–199 (ASERRAKDASR). The 46-residue stretch at 202 to 247 (VRSAQDLSDVSTDEVGIPLRNTERSKDWYKTMFKQIHKLNRDDDSD) folds into the SoHo domain. A compositionally biased stretch (basic and acidic residues) spans 240-260 (LNRDDDSDVHSPRYSFSDDTK). The segment covering 299–313 (SPERNDWEPLDKKVD) has biased composition (basic and acidic residues). Tyr-325 bears the Phosphotyrosine; by ABL1 mark. Phosphoserine is present on residues Ser-345, Pro-346, Tyr-357, Ser-376, and Ser-407. Residues 389–416 (VETVNKSPSANSPQSSAVSPTPDITSEP) form a disordered region. Positions 392 to 412 (VNKSPSANSPQSSAVSPTPDI) are enriched in polar residues. Position 421 is a phosphotyrosine; by ABL1 (Tyr-421). Phosphoserine is present on residues Ser-432 and Ser-470. 6 disordered regions span residues 463–482 (LSGLKRPSSSASTKVDRKGG), 588–607 (YDSKSSSTMSLQEYGTSSRR), 697–739 (SLDF…EMDG), 783–803 (VSNDSREGSGGSVHGDFPKHR), 822–841 (RKHEQQSSRQSDWRSDSRGD), and 862–972 (PLQQ…SPRH). Phosphothreonine is present on Thr-475. Polar residues-rich tracts occupy residues 595 to 606 (TMSLQEYGTSSR) and 704 to 722 (LSKSPTPVLSRSGLTSARS). Ser-969 bears the Phosphoserine mark. SH3 domains lie at 1049 to 1108 (LEMR…LLPP) and 1123 to 1184 (LEYG…VLKR). Thr-1189 is subject to Phosphothreonine. Tyr-1193 and Tyr-1198 each carry phosphotyrosine. Over residues 1198 to 1210 (YSSSPSRSATVSP) the composition is skewed to low complexity. The interval 1198–1227 (YSSSPSRSATVSPQQPQAQQRRVTPDRSQP) is disordered. Phosphoserine occurs at positions 1201 and 1209. The segment covering 1211-1227 (QQPQAQQRRVTPDRSQP) has biased composition (polar residues). In terms of domain architecture, SH3 3 spans 1229 to 1290 (LDLCSYQALY…PGNYVKPLYL (62 aa)). Phosphotyrosine; by ABL1 is present on Tyr-1238.

As to quaternary structure, interacts (via SH3 domain 2) with PXN. Interacts with the long isoform of AFDN and with VCL. AFDN and VCL bind to SORBS1 in a competitive manner and do not form a ternary complex. Interacts with ABL1, CBL, CBLB and INPPL1/SHIP2 through the third SH3 domain. Interaction with ABL1 occurs only after insulin stimulation while this has no effect on the interaction with INPPL1. Interacts with the insulin receptor but dissociates from it following insulin stimulation. Also interacts with SCA7, PTK2/FAK1 and flotillin. Interacts (via third SH3 domain) with the Ten-1 ICD form of TENM1; the interaction induces the translocation of SORBS1 to the nucleus. Interacts with INSM1. Post-translationally, O-glycosylated. Expressed in all tissues tested: heart, brain, spleen, lung, liver, muscle, kidney and testis. Expressed in 3T3-L1 adipocytes but not in 3T3-L1 fibroblasts.

It localises to the cell junction. Its subcellular location is the adherens junction. The protein localises to the cell membrane. The protein resides in the cytoplasm. It is found in the cytoskeleton. It localises to the focal adhesion. Its subcellular location is the nucleus. The protein localises to the nucleus matrix. Functionally, plays a role in tyrosine phosphorylation of CBL by linking CBL to the insulin receptor. Required for insulin-stimulated glucose transport. Involved in formation of actin stress fibers and focal adhesions. This is Sorbin and SH3 domain-containing protein 1 from Mus musculus (Mouse).